The following is a 522-amino-acid chain: Peptide chain release factor 3 (522 aa).

Residues 10 to 277 enclose the tr-type G domain; that stretch reads ASRKTFAIIS…TFVDFAPAPS (268 aa). Residues 19–26, 87–91, and 141–144 contribute to the GTP site; these read SHPDAGKT, DTPGH, and NKMD.

The protein belongs to the TRAFAC class translation factor GTPase superfamily. Classic translation factor GTPase family. PrfC subfamily.

It localises to the cytoplasm. Its function is as follows. Increases the formation of ribosomal termination complexes and stimulates activities of RF-1 and RF-2. It binds guanine nucleotides and has strong preference for UGA stop codons. It may interact directly with the ribosome. The stimulation of RF-1 and RF-2 is significantly reduced by GTP and GDP, but not by GMP. The chain is Peptide chain release factor 3 from Listeria welshimeri serovar 6b (strain ATCC 35897 / DSM 20650 / CCUG 15529 / CIP 8149 / NCTC 11857 / SLCC 5334 / V8).